Here is a 234-residue protein sequence, read N- to C-terminus: Orotidine 5'-phosphate decarboxylase (234 aa).

Residues aspartate 11, lysine 33, 60–69, threonine 120, arginine 181, glutamine 190, glycine 210, and arginine 211 contribute to the substrate site; that span reads DLKFHDIPNT. Catalysis depends on lysine 62, which acts as the Proton donor.

The protein belongs to the OMP decarboxylase family. Type 1 subfamily. As to quaternary structure, homodimer.

The catalysed reaction is orotidine 5'-phosphate + H(+) = UMP + CO2. The protein operates within pyrimidine metabolism; UMP biosynthesis via de novo pathway; UMP from orotate: step 2/2. Functionally, catalyzes the decarboxylation of orotidine 5'-monophosphate (OMP) to uridine 5'-monophosphate (UMP). The polypeptide is Orotidine 5'-phosphate decarboxylase (Shewanella sediminis (strain HAW-EB3)).